The primary structure comprises 215 residues: PIINLSFGEANNYCKIKCSRGIHTLCKFGTSMKPNCGSKLVKVHGVSNDEKNEIVNRHNQFRQKVAKGLETRGNPGPQPPAKNMNVLVWNDELAKIAQTWANQCSFGHDQCRNTEKYQVGQNVAIASTTGNSYATMSKLIEMWENEVKDFNPKKGTMGDNNFSKVGHYTQMVWGKTKEIGCGSVKYIENNWHTHYLVCNYGPAGNYMDQPIYERK.

The signal sequence occupies residues 1-10; sequence PIINLSFGEA. 4 cysteine pairs are disulfide-bonded: Cys14–Cys26, Cys18–Cys111, Cys36–Cys104, and Cys181–Cys198. The SCP domain maps to 55–200; that stretch reads VNRHNQFRQK…WHTHYLVCNY (146 aa).

Belongs to the CRISP family. Venom allergen 5-like subfamily. As to expression, expressed by the venom gland.

It localises to the secreted. This chain is Venom allergen 5.02, found in Dolichovespula maculata (Bald-faced hornet).